Reading from the N-terminus, the 651-residue chain is Intraflagellar transport protein 70A (651 aa).

TPR repeat units lie at residues 8-41 (DGEYTATVYKMIKEGRYGDAIHILSKEHQKHTKS), 42-75 (RAALSLLGYCYYHMQDFTNAAECYEQLTQLHPEV), 140-173 (PDYDVDLGCLLYKEGEFEEACKKFMSSMNVLGYQ), 175-207 (DLAYNIALCYYSLKQYASALKYIAEIIERGIRE), 379-410 (VTKQVQEARHNRDDESLKKYVQDYDEVLEKYI), 411-443 (PVLMAQAKIYWNRENYSMVEKIFHKSLEFCNEH), and 445-478 (TWKLNVAHVLFMQDNKYKEAIGFYEPIVKKHYEN). A coiled-coil region spans residues 494-521 (YIMTSQNEEAEELMRKIEKEEEQISYDD). The stretch at 530–563 (CIVNLVIGTLYCAKGNYDFGISRVIKSLEPYNKK) is one TPR 8 repeat.

The protein belongs to the TTC30/dfy-1/fleer family. As to expression, localizes to the cilia of many ciliated epithelial cell types including pronephric cells, olfactory placode, the brain ventricle and lateral line organs.

The protein localises to the cell projection. The protein resides in the cilium. Functionally, plays a role in anterograde intraflagellar transport (IFT), the process by which cilia precursors are transported from the base of the cilium to the site of their incorporation at the tip. Required for polyglutamylation of axonemal tubulin, which is a prerequisite for correct assembly of cilia and for normal cilia beat amplitude. Does not seem to be required for neuronal microtubule polyglutamylation. The polypeptide is Intraflagellar transport protein 70A (ift70a) (Danio rerio (Zebrafish)).